We begin with the raw amino-acid sequence, 192 residues long: Interleukin-18 (192 aa).

The propeptide occupies 1–35; sequence MAAIPVDDCINFVGMKFIDNTLYFVADSDENLETD.

The protein belongs to the IL-1 family. As to quaternary structure, forms a ternary complex with ligand-binding receptor subunit IL18R1 and signaling receptor subunit IL18RAP at the plasma membrane. Mature IL18 first binds to IL18R1 forming a low affinity binary complex, which then interacts with IL18RAP to form a high affinity ternary complex that signals inside the cell. Interacts with cargo receptor TMED10; the interaction mediates the translocation from the cytoplasm into the ERGIC (endoplasmic reticulum-Golgi intermediate compartment) and thereby secretion. The pro-IL-18 precursor is processed by CASP1, CASP4 or CASP5 to yield its mature, active form. The pro-IL-18 precursor features autoinhibitory interactions between the propeptide and the post-cleavage-site region, preventing recognition by the IL18R1 receptor. Processing by CASP1, CASP4 or CASP5 induces conformational changes to generate critical receptor-binding sites. The mature form is then secreted and released in the extracellular milieu by passing through the gasdermin-D (GSDMD) pore. In contrast, cleavage by CASP3 inactivates IL18.

It localises to the cytoplasm. The protein resides in the cytosol. The protein localises to the secreted. Pro-inflammatory cytokine primarily involved in epithelial barrier repair, polarized T-helper 1 (Th1) cell and natural killer (NK) cell immune responses. Upon binding to IL18R1 and IL18RAP, forms a signaling ternary complex which activates NF-kappa-B, triggering synthesis of inflammatory mediators. Synergizes with IL12/interleukin-12 to induce IFNG synthesis from T-helper 1 (Th1) cells and natural killer (NK) cells. Involved in transduction of inflammation downstream of pyroptosis: its mature form is specifically released in the extracellular milieu by passing through the gasdermin-D (GSDMD) pore. This is Interleukin-18 (IL18) from Felis catus (Cat).